Here is a 273-residue protein sequence, read N- to C-terminus: NADPH-dependent 7-cyano-7-deazaguanine reductase (273 aa).

Val-81–Ser-83 provides a ligand contact to substrate. NADPH is bound at residue Ser-83 to Lys-84. Residue Cys-179 is the Thioimide intermediate of the active site. Asp-186 functions as the Proton donor in the catalytic mechanism. Ala-218–Glu-219 is a binding site for substrate. Residue Arg-247–Gly-248 coordinates NADPH.

It belongs to the GTP cyclohydrolase I family. QueF type 2 subfamily. Homodimer.

It localises to the cytoplasm. The enzyme catalyses 7-aminomethyl-7-carbaguanine + 2 NADP(+) = 7-cyano-7-deazaguanine + 2 NADPH + 3 H(+). It participates in tRNA modification; tRNA-queuosine biosynthesis. Its function is as follows. Catalyzes the NADPH-dependent reduction of 7-cyano-7-deazaguanine (preQ0) to 7-aminomethyl-7-deazaguanine (preQ1). This chain is NADPH-dependent 7-cyano-7-deazaguanine reductase, found in Rickettsia akari (strain Hartford).